The sequence spans 447 residues: uncharacterized protein (447 aa).

Residues Cys-87, Cys-93, Cys-96, and Cys-162 each coordinate [4Fe-4S] cluster. Positions 284, 313, 334, and 375 each coordinate S-adenosyl-L-methionine. Cys-402 serves as the catalytic Nucleophile.

Belongs to the class I-like SAM-binding methyltransferase superfamily. RNA M5U methyltransferase family.

This is an uncharacterized protein from Nanoarchaeum equitans (strain Kin4-M).